Reading from the N-terminus, the 285-residue chain is Undecaprenyl-diphosphatase (285 aa).

The next 7 helical transmembrane spans lie at 12 to 34 (IVIA…HAVI), 49 to 69 (IFLP…LVYF), 93 to 113 (IHIL…GGLL), 120 to 140 (LFGT…LLLL), 159 to 179 (LTYA…LPGI), 234 to 254 (VATI…AFLM), and 263 to 283 (WALS…FFIL).

The protein belongs to the UppP family.

The protein localises to the cell inner membrane. The enzyme catalyses di-trans,octa-cis-undecaprenyl diphosphate + H2O = di-trans,octa-cis-undecaprenyl phosphate + phosphate + H(+). Functionally, catalyzes the dephosphorylation of undecaprenyl diphosphate (UPP). Confers resistance to bacitracin. The protein is Undecaprenyl-diphosphatase of Gluconacetobacter diazotrophicus (strain ATCC 49037 / DSM 5601 / CCUG 37298 / CIP 103539 / LMG 7603 / PAl5).